Here is a 397-residue protein sequence, read N- to C-terminus: Lysophospholipid transporter LplT (397 aa).

Residues 1-17 (MSESVHTNTSLWSKGMK) are Periplasmic-facing. Residues 18 to 38 (AVIVAQFLSAFGDNALLFATL) form a helical membrane-spanning segment. Topologically, residues 39-52 (ALLKAQFYPEWSQP) are cytoplasmic. Residues 53-73 (ILQMVFVGAYILFAPFVGQVA) traverse the membrane as a helical segment. Residues 74–90 (DSFAKGRVMMFANGLKL) lie on the Periplasmic side of the membrane. Residues 91 to 111 (LGAASICFGINPFLGYTLVGV) traverse the membrane as a helical segment. Over 112-144 (GAAAYSPAKYGILGELTTGSKLVKANGLMEAST) the chain is Cytoplasmic. The chain crosses the membrane as a helical span at residues 145-165 (IAAILLGSVAGGVLADWHVLV). A166 is a topological domain (periplasmic). The chain crosses the membrane as a helical span at residues 167 to 187 (LAACALAYGGAVVANIYIPKL). The Cytoplasmic portion of the chain corresponds to 188-226 (AAARPGQSWNLISMTRSFLNACTSLWRNGETRFSLVGTS). The helical transmembrane segment at 227 to 247 (LFWGAGVTLRFLLVLWVPVAL) threads the bilayer. Topologically, residues 248 to 256 (GITDNATPT) are periplasmic. Residues 257–277 (YLNAMVAIGIVVGAGAAAKLV) traverse the membrane as a helical segment. Topologically, residues 278 to 280 (TLE) are cytoplasmic. The chain crosses the membrane as a helical span at residues 281–301 (TVSRCMPAGILIGVVVLIFSL). At 302–304 (QHE) the chain is on the periplasmic side. Residues 305-325 (LLPAYALLMLIGVLGGFFVVP) form a helical membrane-spanning segment. Residues 326–343 (LNALLQERGKKSVGAGNA) are Cytoplasmic-facing. The chain crosses the membrane as a helical span at residues 344–364 (IAVQNLGENSAMLLMLGIYSL). Over 365–366 (AV) the chain is Periplasmic. A helical membrane pass occupies residues 367 to 387 (MVGIPVVPIGIGFGALFALAI). The Cytoplasmic portion of the chain corresponds to 388–397 (TALWIWQRRH).

It belongs to the major facilitator superfamily. LplT (TC 2.A.1.42) family.

The protein resides in the cell inner membrane. Catalyzes the facilitated diffusion of 2-acyl-glycero-3-phosphoethanolamine (2-acyl-GPE) into the cell. This Escherichia coli O7:K1 (strain IAI39 / ExPEC) protein is Lysophospholipid transporter LplT.